The primary structure comprises 87 residues: Defensin-like protein 176 (87 aa).

An N-terminal signal peptide occupies residues 1–23 (MAKATSSLVVPIIFLVIFALVEQ). 4 disulfide bridges follow: C27–C66, C36–C55, C39–C60, and C43–C62.

The protein belongs to the DEFL family.

It is found in the secreted. The sequence is that of Defensin-like protein 176 (LCR65) from Arabidopsis thaliana (Mouse-ear cress).